The chain runs to 39 residues: Photosystem II reaction center protein Psb30 (39 aa).

A helical membrane pass occupies residues 12 to 32; sequence IFQLTFVALIMLAGPFVIFLL.

This sequence belongs to the Psb30/Ycf12 family. In terms of assembly, PSII is composed of 1 copy each of membrane proteins PsbA, PsbB, PsbC, PsbD, PsbE, PsbF, PsbH, PsbI, PsbJ, PsbK, PsbL, PsbM, PsbT, PsbX, PsbY, PsbZ, Psb30/Ycf12, peripheral proteins PsbO, CyanoQ (PsbQ), PsbU, PsbV and a large number of cofactors. It forms dimeric complexes.

The protein resides in the cellular thylakoid membrane. In terms of biological role, a core subunit of photosystem II (PSII), probably helps stabilize the reaction center. The chain is Photosystem II reaction center protein Psb30 from Microcystis aeruginosa (strain NIES-843 / IAM M-2473).